The chain runs to 212 residues: MNTLAMDAEQLFLSKTIFEEEVFHEGFSLIAGIDEVGRGPLAGPVVAGACILPRGKVFAGVNDSKKLTPKERGKIRDILVNDSEVYYGLGVVSVERIDEINILEATKEAMAAAIANLPIHPDFLLVDGLHLPHKIPCKKIIKGDSKSASIAAASILAKEYRDDLMRELHQLYPDYGFDKHKGYGTAAHLAALKAFGPCDCHRKSFAPVRQVF.

The region spanning 28–212 (SLIAGIDEVG…KSFAPVRQVF (185 aa)) is the RNase H type-2 domain. A divalent metal cation contacts are provided by Asp-34, Glu-35, and Asp-127.

Belongs to the RNase HII family. Mn(2+) serves as cofactor. Mg(2+) is required as a cofactor.

The protein resides in the cytoplasm. The catalysed reaction is Endonucleolytic cleavage to 5'-phosphomonoester.. In terms of biological role, endonuclease that specifically degrades the RNA of RNA-DNA hybrids. The protein is Ribonuclease HII of Chlamydia abortus (strain DSM 27085 / S26/3) (Chlamydophila abortus).